We begin with the raw amino-acid sequence, 730 residues long: Wall-associated receptor kinase-like 1 (730 aa).

Positions 1 to 25 are cleaved as a signal peptide; it reads MKTKTSIFQFIVASVLTLLINDSSA. Residues 26 to 358 are Extracellular-facing; that stretch reads ATPPPPISNS…KPTKPPVLQG (333 aa). Residues asparagine 34, asparagine 40, asparagine 70, asparagine 77, asparagine 92, asparagine 119, asparagine 132, asparagine 211, asparagine 233, asparagine 269, and asparagine 281 are each glycosylated (N-linked (GlcNAc...) asparagine). Residues 282–341 are atypical EGF-like; that stretch reads CSCEYDYFSGMSYRNCYCDYGYTGNPYLRGGCVDTDSCEGNHNCGEDAHCVNMPGPMSMC. Intrachain disulfides connect cysteine 284–cysteine 297, cysteine 319–cysteine 331, and cysteine 325–cysteine 341. Residues 359 to 379 traverse the membrane as a helical segment; the sequence is ILIGLSGLVFFVGLFWLFKLI. The Cytoplasmic portion of the chain corresponds to 380-730; that stretch reads KKRRNINRSK…DQPMAINNKR (351 aa). In terms of domain architecture, Protein kinase spans 429-702; it reads FSIDRVLGQG…KEVSNELERI (274 aa). Residues 435–443 and lysine 457 each bind ATP; that span reads LGQGGQGTV. Residue tyrosine 502 is modified to Phosphotyrosine. Residue aspartate 554 is the Proton acceptor of the active site. A phosphothreonine mark is found at threonine 588 and threonine 593. Tyrosine 601 carries the phosphotyrosine modification. Residues 685–730 are disordered; that stretch reads KGKNRPNMKEVSNELERIRSSPEDLDVRTENEDEEEDQPMAINNKR. Over residues 691-714 the composition is skewed to basic and acidic residues; sequence NMKEVSNELERIRSSPEDLDVRTE.

It belongs to the protein kinase superfamily. Ser/Thr protein kinase family. As to expression, preferentially expressed in roots and flowers.

The protein resides in the membrane. It carries out the reaction L-seryl-[protein] + ATP = O-phospho-L-seryl-[protein] + ADP + H(+). The catalysed reaction is L-threonyl-[protein] + ATP = O-phospho-L-threonyl-[protein] + ADP + H(+). Serine/threonine-protein kinase that may function as a signaling receptor of extracellular matrix component. The chain is Wall-associated receptor kinase-like 1 (WAKL1) from Arabidopsis thaliana (Mouse-ear cress).